Consider the following 183-residue polypeptide: ATP synthase subunit delta (183 aa).

It belongs to the ATPase delta chain family. As to quaternary structure, F-type ATPases have 2 components, F(1) - the catalytic core - and F(0) - the membrane proton channel. F(1) has five subunits: alpha(3), beta(3), gamma(1), delta(1), epsilon(1). F(0) has three main subunits: a(1), b(2) and c(10-14). The alpha and beta chains form an alternating ring which encloses part of the gamma chain. F(1) is attached to F(0) by a central stalk formed by the gamma and epsilon chains, while a peripheral stalk is formed by the delta and b chains.

Its subcellular location is the cell inner membrane. Its function is as follows. F(1)F(0) ATP synthase produces ATP from ADP in the presence of a proton or sodium gradient. F-type ATPases consist of two structural domains, F(1) containing the extramembraneous catalytic core and F(0) containing the membrane proton channel, linked together by a central stalk and a peripheral stalk. During catalysis, ATP synthesis in the catalytic domain of F(1) is coupled via a rotary mechanism of the central stalk subunits to proton translocation. This protein is part of the stalk that links CF(0) to CF(1). It either transmits conformational changes from CF(0) to CF(1) or is implicated in proton conduction. The chain is ATP synthase subunit delta from Rickettsia typhi (strain ATCC VR-144 / Wilmington).